The sequence spans 86 residues: Small ribosomal subunit protein bS18 (86 aa).

Belongs to the bacterial ribosomal protein bS18 family. In terms of assembly, part of the 30S ribosomal subunit. Forms a tight heterodimer with protein bS6.

In terms of biological role, binds as a heterodimer with protein bS6 to the central domain of the 16S rRNA, where it helps stabilize the platform of the 30S subunit. The protein is Small ribosomal subunit protein bS18 of Campylobacter curvus (strain 525.92).